We begin with the raw amino-acid sequence, 98 residues long: Small ribosomal subunit protein eS24 (98 aa).

The tract at residues 76–98 (GRQRTERSYLLNRGEPKKEEEEA) is disordered. Positions 89-98 (GEPKKEEEEA) are enriched in basic and acidic residues.

Belongs to the eukaryotic ribosomal protein eS24 family.

The protein is Small ribosomal subunit protein eS24 of Methanosphaerula palustris (strain ATCC BAA-1556 / DSM 19958 / E1-9c).